The primary structure comprises 373 residues: ATP phosphoribosyltransferase regulatory subunit (373 aa).

It belongs to the class-II aminoacyl-tRNA synthetase family. HisZ subfamily. Heteromultimer composed of HisG and HisZ subunits.

The protein resides in the cytoplasm. It participates in amino-acid biosynthesis; L-histidine biosynthesis; L-histidine from 5-phospho-alpha-D-ribose 1-diphosphate: step 1/9. In terms of biological role, required for the first step of histidine biosynthesis. May allow the feedback regulation of ATP phosphoribosyltransferase activity by histidine. The protein is ATP phosphoribosyltransferase regulatory subunit of Rhizobium johnstonii (strain DSM 114642 / LMG 32736 / 3841) (Rhizobium leguminosarum bv. viciae).